Reading from the N-terminus, the 107-residue chain is DNA polymerase delta subunit 4 (107 aa).

A PCNA-interaction protein motif (PIP box) motif is present at residues 1-16; sequence MGRKRLITDSYPVVKR. The tract at residues 1–44 is disordered; the sequence is MGRKRLITDSYPVVKRREGPAGHSKGELAPELGEEPQPRDEEEA. A compositionally biased stretch (basic and acidic residues) spans 15-28; that stretch reads KRREGPAGHSKGEL.

The protein belongs to the DNA polymerase delta subunit 4 family. In terms of assembly, component of the tetrameric DNA polymerase delta complex (Pol-delta4), which consists of POLD1/p125, POLD2/p50, POLD3/p66/p68 and POLD4/p12, with POLD1 bearing DNA polymerase and 3' to 5' proofreading exonuclease activities. Within this complex, directly interacts with POLD1 and POLD2. Directly interacts with PCNA, as do POLD1 and POLD3; this interaction stimulates Pol-delta4 polymerase activity. As POLD1 and POLD2, directly interacts with WRNIP1; this interaction stimulates DNA polymerase delta-mediated DNA synthesis, independently of the presence of PCNA. This stimulation may be due predominantly to an increase of initiation frequency and also to increased processivity. Upon genotoxic stress induced by DNA damaging agents or by replication stress, POLD4 is proteolytically degraded and Pol-delta4 is converted into a trimeric form of the complex (Pol-delta3) which has an increased proofreading activity. The DNA polymerase delta complex interacts with POLDIP2; this interaction is probably mediated through direct binding to POLD2. In terms of processing, ubiquitinated; undergoes 'Lys-48'-linked ubiquitination in response to UV irradiation, leading to proteasomal degradation. This modification is partly mediated by RNF8 and by the DCX(DTL) E3 ubiquitin ligase complex (also called CRL4(CDT2)). Efficient degradation requires the presence of PCNA and is required for the inhibition of fork progression after DNA damage.

The protein localises to the nucleus. Functionally, as a component of the tetrameric DNA polymerase delta complex (Pol-delta4), plays a role in high fidelity genome replication and repair. Within this complex, increases the rate of DNA synthesis and decreases fidelity by regulating POLD1 polymerase and proofreading 3' to 5' exonuclease activity. Pol-delta4 participates in Okazaki fragment processing, through both the short flap pathway, as well as a nick translation system. Under conditions of DNA replication stress, required for the repair of broken replication forks through break-induced replication (BIR), a mechanism that may induce segmental genomic duplications of up to 200 kb. Involved in Pol-delta4 translesion synthesis (TLS) of templates carrying O6-methylguanine or abasic sites. Its degradation in response to DNA damage is required for the inhibition of fork progression and cell survival. In Homo sapiens (Human), this protein is DNA polymerase delta subunit 4 (POLD4).